Consider the following 234-residue polypeptide: 2-C-methyl-D-erythritol 4-phosphate cytidylyltransferase (234 aa).

Belongs to the IspD/TarI cytidylyltransferase family. IspD subfamily.

It catalyses the reaction 2-C-methyl-D-erythritol 4-phosphate + CTP + H(+) = 4-CDP-2-C-methyl-D-erythritol + diphosphate. The protein operates within isoprenoid biosynthesis; isopentenyl diphosphate biosynthesis via DXP pathway; isopentenyl diphosphate from 1-deoxy-D-xylulose 5-phosphate: step 2/6. In terms of biological role, catalyzes the formation of 4-diphosphocytidyl-2-C-methyl-D-erythritol from CTP and 2-C-methyl-D-erythritol 4-phosphate (MEP). This Pseudomonas aeruginosa (strain UCBPP-PA14) protein is 2-C-methyl-D-erythritol 4-phosphate cytidylyltransferase.